The chain runs to 343 residues: Glycerol-3-phosphate dehydrogenase [NAD(P)+] (343 aa).

The NADPH site is built by serine 15, phenylalanine 16, arginine 36, and lysine 110. Sn-glycerol 3-phosphate contacts are provided by lysine 110 and glycine 138. NADPH is bound at residue alanine 142. Positions 193, 246, 256, 257, and 258 each coordinate sn-glycerol 3-phosphate. Lysine 193 (proton acceptor) is an active-site residue. Position 257 (arginine 257) interacts with NADPH. Residue glutamate 283 coordinates NADPH.

This sequence belongs to the NAD-dependent glycerol-3-phosphate dehydrogenase family.

It localises to the cytoplasm. It catalyses the reaction sn-glycerol 3-phosphate + NAD(+) = dihydroxyacetone phosphate + NADH + H(+). It carries out the reaction sn-glycerol 3-phosphate + NADP(+) = dihydroxyacetone phosphate + NADPH + H(+). It functions in the pathway membrane lipid metabolism; glycerophospholipid metabolism. Its function is as follows. Catalyzes the reduction of the glycolytic intermediate dihydroxyacetone phosphate (DHAP) to sn-glycerol 3-phosphate (G3P), the key precursor for phospholipid synthesis. This Alcanivorax borkumensis (strain ATCC 700651 / DSM 11573 / NCIMB 13689 / SK2) protein is Glycerol-3-phosphate dehydrogenase [NAD(P)+].